A 460-amino-acid polypeptide reads, in one-letter code: Sorting nexin-4 (460 aa).

Polar residues predominate over residues 1-16 (MTATEQQQDDFSNVSW). Residues 1–53 (MTATEQQQDDFSNVSWSEHVHDQQTRSVPDAEEPGHDMNAPGTGLERDAPSLG) form a disordered region. Residues 56–178 (KLECTVDTPI…TFLESPDWNA (123 aa)) form the PX domain. 3 coiled-coil regions span residues 238 to 266 (EKVIARVARREADLEVDLRDLAEQFQKLI), 306 to 337 (RDMQAYSIALKNLLKAREQKQLDYEQLTEYLN), and 374 to 403 (QARRERTRKLELRVEELTHEVESARKTSDM).

It belongs to the sorting nexin family. In terms of assembly, forms a complex with ATG20 and ATG17.

It is found in the cytoplasm. Its subcellular location is the membrane. The protein localises to the endosome membrane. Sorting nexin involved in the separation or division of vacuoles throughout the entire life cycle of the cells. Involved in retrieval of late-Golgi SNAREs from post-Golgi endosomes to the trans-Golgi network, for cytoplasm to vacuole transport (Cvt), and autophagy of large cargos including mitophagy, pexophagy and glycophagy. Autophagy is required for proper vegetative growth, asexual/sexual reproduction, and full virulence. Autophagy is particularly involved in the biosynthesis of deoxynivalenol (DON), an important virulence determinant. The sequence is that of Sorting nexin-4 from Gibberella zeae (strain ATCC MYA-4620 / CBS 123657 / FGSC 9075 / NRRL 31084 / PH-1) (Wheat head blight fungus).